The primary structure comprises 314 residues: Olfactory receptor 10A3 (314 aa).

Over 1–25 the chain is Extracellular; it reads MKRQNQSCVVEFILLGFSNFPELQV. N-linked (GlcNAc...) asparagine glycosylation occurs at asparagine 5. A helical membrane pass occupies residues 26–46; the sequence is QLFGVFLVIYVVTLMGNAIIT. Residues 47 to 54 lie on the Cytoplasmic side of the membrane; it reads VIISLNQS. The chain crosses the membrane as a helical span at residues 55–75; the sequence is LHVPMYLFLLNLSVVEVSFSA. Residues 76–99 are Extracellular-facing; sequence VITPEMLVVLSTEKTMISFVGCFA. Cysteine 97 and cysteine 189 are joined by a disulfide. Residues 100 to 120 traverse the membrane as a helical segment; it reads QMYFILLFGGTECFLLGAMAY. Residues 121–139 lie on the Cytoplasmic side of the membrane; the sequence is DRFAAICHPLNYPVIMNRG. Residues 140 to 160 form a helical membrane-spanning segment; it reads VFMKLVIFSWISGIMVATVQT. The Extracellular portion of the chain corresponds to 161-197; it reads TWVFSFPFCGPNEINHLFCETPPVLELVCADTFLFEI. A helical membrane pass occupies residues 198 to 217; it reads YAFTGTILIVMVPFLLILLS. At 218 to 237 the chain is on the cytoplasmic side; it reads YIRVLFAILKMPSTTGRQKA. Residues 238 to 258 traverse the membrane as a helical segment; the sequence is FSTCASHLTSVTLFYGTANMT. Residues 259 to 271 are Extracellular-facing; the sequence is YLQPKSGYSPETK. A helical transmembrane segment spans residues 272 to 292; sequence KLISLAYTLLTPLLNPLIYSL. The Cytoplasmic segment spans residues 293–314; the sequence is RNSEMKRTLIKLWRRKVILHTF.

It belongs to the G-protein coupled receptor 1 family.

Its subcellular location is the cell membrane. In terms of biological role, odorant receptor. The sequence is that of Olfactory receptor 10A3 (OR10A3) from Homo sapiens (Human).